We begin with the raw amino-acid sequence, 926 residues long: Peripheral plasma membrane protein CASK (926 aa).

Residues 12–276 (YELCEVIGKG…VYEALNHPWL (265 aa)) enclose the Protein kinase domain. ATP is bound by residues 18–26 (IGKGPFSVV) and Lys-41. Phosphoserine is present on Ser-51. Residue Asp-141 is part of the active site. A phosphoserine; by autocatalysis mark is found at Ser-151 and Ser-155. Residue Thr-182 is modified to Phosphothreonine. The tract at residues 305–315 (KGAVLAAVSSH) is calmodulin-binding. Ser-313 is subject to Phosphoserine. L27 domains are found at residues 343–398 (AERA…SPQI) and 402–455 (PSDA…YSDE). The interval 482 to 909 (MENVTRVRLV…DETIRHLEEA (428 aa)) is required for interaction with NRXN1 (via C-terminal tail). The region spanning 490 to 571 (LVQFQKNTDE…SITFKIVPSY (82 aa)) is the PDZ domain. Phosphoserine occurs at positions 570 and 571. The tract at residues 574–610 (QSSSCERDSPSTSRQSPANGHSSTNNSVSDLPSTTQP) is disordered. An SH3 domain is found at 612–682 (GRQIYVRAQF…PSPELQEWRV (71 aa)). In terms of domain architecture, Guanylate kinase-like spans 739–911 (RKTLVLLGAH…TIRHLEEAVE (173 aa)).

This sequence in the N-terminal section; belongs to the protein kinase superfamily. CAMK Ser/Thr protein kinase family. CaMK subfamily. The protein belongs to the MAGUK family. CASK and LIN7 form a tripartite complex with CASKIN1. Component of the brain-specific heterotrimeric complex (LIN-10-LIN-2-LIN-7 complex) composed of at least APBA1, CASK, and LIN7, which associates with the motor protein KIF17 to transport vesicles along microtubules. Forms a heterotrimeric complex with DLG1 and LIN7B via their L27 domains. Identified in a complex with ACTN4, IQGAP1, MAGI2, NPHS1, SPTAN1 and SPTBN1. Part of a complex containing CASK, TBR1 and TSPYL2. Interacts with WHRN. Interacts (via the PDZ, SH3 and guanylate kinase-like domains) with NRXN1 (via C-terminus). Interacts with CASKIN1, APBA1, LIN7(A/B/C), and L27 domain of DLG1 and isoform 2 of DLG4. Interacts with FCHSD2. Interacts with KIRREL3. Interacts with TBR1. Interacts with TSPYL2. It depends on Unlike other protein kinases, does not require a divalent cation such as magnesium for catalytic activity. as a cofactor.

It is found in the nucleus. The protein localises to the cytoplasm. The protein resides in the cell membrane. It carries out the reaction L-seryl-[protein] + ATP = O-phospho-L-seryl-[protein] + ADP + H(+). The enzyme catalyses L-threonyl-[protein] + ATP = O-phospho-L-threonyl-[protein] + ADP + H(+). With respect to regulation, differs from archetypal CaMK members in that the kinase domain exhibits a constitutively active conformation and the autoinhibitory region does not engage in direct contact with the ATP-binding cleft, although it still binds Ca(2+)/CAM. Multidomain scaffolding Mg(2+)-independent protein kinase that catalyzes the phosphotransfer from ATP to proteins such as NRXN1, and plays a role in synaptic transmembrane protein anchoring and ion channel trafficking. Contributes to neural development and regulation of gene expression via interaction with the transcription factor TBR1. Binds to cell-surface proteins, including amyloid precursor protein, neurexins, and syndecans. May mediate a link between the extracellular matrix and the actin cytoskeleton via its interaction with syndecan and with the actin/spectrin-binding protein 4.1. Component of the LIN-10-LIN-2-LIN-7 complex, which associates with the motor protein KIF17 to transport vesicles containing N-methyl-D-aspartate (NMDA) receptor subunit NR2B along microtubules. The chain is Peripheral plasma membrane protein CASK from Mus musculus (Mouse).